The following is a 507-amino-acid chain: ATP synthase subunit alpha (507 aa).

170-177 (GDRKTGKT) contributes to the ATP binding site.

This sequence belongs to the ATPase alpha/beta chains family. F-type ATPases have 2 components, CF(1) - the catalytic core - and CF(0) - the membrane proton channel. CF(1) has five subunits: alpha(3), beta(3), gamma(1), delta(1), epsilon(1). CF(0) has three main subunits: a(1), b(2) and c(9-12). The alpha and beta chains form an alternating ring which encloses part of the gamma chain. CF(1) is attached to CF(0) by a central stalk formed by the gamma and epsilon chains, while a peripheral stalk is formed by the delta and b chains.

The protein resides in the cell inner membrane. It catalyses the reaction ATP + H2O + 4 H(+)(in) = ADP + phosphate + 5 H(+)(out). Produces ATP from ADP in the presence of a proton gradient across the membrane. The alpha chain is a regulatory subunit. The chain is ATP synthase subunit alpha from Anaplasma marginale (strain Florida).